A 161-amino-acid chain; its full sequence is Protein-export protein SecB (161 aa).

This sequence belongs to the SecB family. Homotetramer, a dimer of dimers. One homotetramer interacts with 1 SecA dimer.

The protein localises to the cytoplasm. Functionally, one of the proteins required for the normal export of preproteins out of the cell cytoplasm. It is a molecular chaperone that binds to a subset of precursor proteins, maintaining them in a translocation-competent state. It also specifically binds to its receptor SecA. The polypeptide is Protein-export protein SecB (Shewanella baltica (strain OS223)).